The primary structure comprises 180 residues: uncharacterized protein (180 aa).

This is an uncharacterized protein from Methanocaldococcus jannaschii (strain ATCC 43067 / DSM 2661 / JAL-1 / JCM 10045 / NBRC 100440) (Methanococcus jannaschii).